Consider the following 695-residue polypeptide: Elongation factor G (695 aa).

The region spanning 12–286 (DKLRNIGIMA…AVIDYLPSPL (275 aa)) is the tr-type G domain. Residues 21–28 (AHIDAGKT), 85–89 (DTPGH), and 139–142 (NKMD) contribute to the GTP site.

It belongs to the TRAFAC class translation factor GTPase superfamily. Classic translation factor GTPase family. EF-G/EF-2 subfamily.

It is found in the cytoplasm. Its function is as follows. Catalyzes the GTP-dependent ribosomal translocation step during translation elongation. During this step, the ribosome changes from the pre-translocational (PRE) to the post-translocational (POST) state as the newly formed A-site-bound peptidyl-tRNA and P-site-bound deacylated tRNA move to the P and E sites, respectively. Catalyzes the coordinated movement of the two tRNA molecules, the mRNA and conformational changes in the ribosome. In Thermotoga sp. (strain RQ2), this protein is Elongation factor G.